We begin with the raw amino-acid sequence, 449 residues long: Trigger factor (449 aa).

The PPIase FKBP-type domain occupies 172-257 (GDRVTVDFVG…LKQVEWAHLP (86 aa)).

It belongs to the FKBP-type PPIase family. Tig subfamily.

It localises to the cytoplasm. The enzyme catalyses [protein]-peptidylproline (omega=180) = [protein]-peptidylproline (omega=0). Its function is as follows. Involved in protein export. Acts as a chaperone by maintaining the newly synthesized protein in an open conformation. Functions as a peptidyl-prolyl cis-trans isomerase. The chain is Trigger factor from Ralstonia nicotianae (strain ATCC BAA-1114 / GMI1000) (Ralstonia solanacearum).